Consider the following 275-residue polypeptide: Large ribosomal subunit protein uL2 (275 aa).

The segment at 223–275 (VAMNPVDHPHGGGEGRTSGGRHPVSPWGQPTKGYKTRSNKRTDKYIVRRRNKK) is disordered.

This sequence belongs to the universal ribosomal protein uL2 family. Part of the 50S ribosomal subunit. Forms a bridge to the 30S subunit in the 70S ribosome.

In terms of biological role, one of the primary rRNA binding proteins. Required for association of the 30S and 50S subunits to form the 70S ribosome, for tRNA binding and peptide bond formation. It has been suggested to have peptidyltransferase activity; this is somewhat controversial. Makes several contacts with the 16S rRNA in the 70S ribosome. The polypeptide is Large ribosomal subunit protein uL2 (Shewanella piezotolerans (strain WP3 / JCM 13877)).